A 553-amino-acid polypeptide reads, in one-letter code: Solute carrier family 45 member 3 (553 aa).

Transmembrane regions (helical) follow at residues 19-39 (LLIN…ITYV), 52-72 (FMTM…PLLG), 88-108 (FIWA…RAGW), 120-140 (LELA…QVCF), 161-181 (YSVY…LPAI), 198-218 (CLFG…LLVA), 275-295 (FVAE…YTDF), 323-343 (MGSL…LVMD), 353-373 (AVYL…CLSH), 382-402 (AALT…LASL), and 522-542 (AYMV…TQVV).

Belongs to the glycoside-pentoside-hexuronide (GPH) cation symporter transporter (TC 2.A.2) family.

It localises to the membrane. It catalyses the reaction sucrose(out) + H(+)(out) = sucrose(in) + H(+)(in). Proton-associated sucrose transporter. May be able to transport also glucose and fructose. The polypeptide is Solute carrier family 45 member 3 (SLC45A3) (Macaca fascicularis (Crab-eating macaque)).